The following is a 238-amino-acid chain: tRNA1(Val) (adenine(37)-N6)-methyltransferase (238 aa).

It belongs to the methyltransferase superfamily. tRNA (adenine-N(6)-)-methyltransferase family.

It localises to the cytoplasm. The enzyme catalyses adenosine(37) in tRNA1(Val) + S-adenosyl-L-methionine = N(6)-methyladenosine(37) in tRNA1(Val) + S-adenosyl-L-homocysteine + H(+). In terms of biological role, specifically methylates the adenine in position 37 of tRNA(1)(Val) (anticodon cmo5UAC). The protein is tRNA1(Val) (adenine(37)-N6)-methyltransferase of Shewanella sp. (strain W3-18-1).